We begin with the raw amino-acid sequence, 437 residues long: Serine--tRNA ligase (437 aa).

Residue 240-242 (TAE) coordinates L-serine. 271–273 (RAE) serves as a coordination point for ATP. Glutamate 294 serves as a coordination point for L-serine. 358–361 (EISS) is an ATP binding site. Serine 394 is an L-serine binding site.

Belongs to the class-II aminoacyl-tRNA synthetase family. Type-1 seryl-tRNA synthetase subfamily. As to quaternary structure, homodimer. The tRNA molecule binds across the dimer.

It localises to the cytoplasm. The enzyme catalyses tRNA(Ser) + L-serine + ATP = L-seryl-tRNA(Ser) + AMP + diphosphate + H(+). The catalysed reaction is tRNA(Sec) + L-serine + ATP = L-seryl-tRNA(Sec) + AMP + diphosphate + H(+). The protein operates within aminoacyl-tRNA biosynthesis; selenocysteinyl-tRNA(Sec) biosynthesis; L-seryl-tRNA(Sec) from L-serine and tRNA(Sec): step 1/1. Catalyzes the attachment of serine to tRNA(Ser). Is also able to aminoacylate tRNA(Sec) with serine, to form the misacylated tRNA L-seryl-tRNA(Sec), which will be further converted into selenocysteinyl-tRNA(Sec). This Methylobacterium nodulans (strain LMG 21967 / CNCM I-2342 / ORS 2060) protein is Serine--tRNA ligase.